Consider the following 415-residue polypeptide: Queuine tRNA-ribosyltransferase accessory subunit 2 (415 aa).

Positions 351, 353, 356, and 382 each coordinate Zn(2+).

Belongs to the queuine tRNA-ribosyltransferase family. QTRT2 subfamily. As to quaternary structure, heterodimer of a catalytic subunit qtrt1 and an accessory subunit qtrt2. It depends on Zn(2+) as a cofactor.

The protein resides in the cytoplasm. The protein localises to the mitochondrion outer membrane. Functionally, non-catalytic subunit of the queuine tRNA-ribosyltransferase (TGT) that catalyzes the base-exchange of a guanine (G) residue with queuine (Q) at position 34 (anticodon wobble position) in tRNAs with GU(N) anticodons (tRNA-Asp, -Asn, -His and -Tyr), resulting in the hypermodified nucleoside queuosine (7-(((4,5-cis-dihydroxy-2-cyclopenten-1-yl)amino)methyl)-7-deazaguanosine). The chain is Queuine tRNA-ribosyltransferase accessory subunit 2 from Xenopus laevis (African clawed frog).